The following is a 544-amino-acid chain: Probable protein kinase UbiB (544 aa).

Residues 123 to 500 (DFDEKALASA…RNKQRKSQYL (378 aa)) enclose the Protein kinase domain. ATP contacts are provided by residues 129–137 (LASASIAQV) and K152. D286 acts as the Proton acceptor in catalysis. Helical transmembrane passes span 499–519 (YLLG…ISAS) and 522–542 (MAIA…YKSG).

The protein belongs to the ABC1 family. UbiB subfamily.

Its subcellular location is the cell inner membrane. It functions in the pathway cofactor biosynthesis; ubiquinone biosynthesis [regulation]. Functionally, is probably a protein kinase regulator of UbiI activity which is involved in aerobic coenzyme Q (ubiquinone) biosynthesis. Required for the expression of 2'-N-acetyltransferase. This Providencia stuartii protein is Probable protein kinase UbiB.